Consider the following 229-residue polypeptide: Peptidase E (229 aa).

Catalysis depends on charge relay system residues S120, D135, and H157.

The protein belongs to the peptidase S51 family.

The protein resides in the cytoplasm. It catalyses the reaction Dipeptidase E catalyzes the hydrolysis of dipeptides Asp-|-Xaa. It does not act on peptides with N-terminal Glu, Asn or Gln, nor does it cleave isoaspartyl peptides.. In terms of biological role, hydrolyzes dipeptides containing N-terminal aspartate residues. May play a role in allowing the cell to use peptide aspartate to spare carbon otherwise required for the synthesis of the aspartate family of amino acids. The polypeptide is Peptidase E (Shigella boydii serotype 18 (strain CDC 3083-94 / BS512)).